Here is a 77-residue protein sequence, read N- to C-terminus: U10-lycotoxin-Ls1b (77 aa).

Residues 1 to 20 form the signal peptide; that stretch reads MKLIIFTGLVLFAIVSLIEA. Residues 21–26 constitute a propeptide that is removed on maturation; the sequence is EEESGR.

It belongs to the neurotoxin 19 (CSTX) family. 09 (U10-Lctx) subfamily. Post-translationally, contains 4 disulfide bonds. As to expression, expressed by the venom gland.

It is found in the secreted. In Lycosa singoriensis (Wolf spider), this protein is U10-lycotoxin-Ls1b.